Reading from the N-terminus, the 302-residue chain is Forkhead box protein R2 (302 aa).

The fork-head DNA-binding region spans 183-285; the sequence is RPPLNYSHLV…RVLAYARRES (103 aa).

It localises to the nucleus. In Mus musculus (Mouse), this protein is Forkhead box protein R2 (Foxr2).